The primary structure comprises 301 residues: Homeobox protein knotted-1-like 1 (301 aa).

Residues 141–170 form a disordered region; it reads CSGATSPPATTATHSDEMVGSSDEDQCSGE. Residues 144–153 show a composition bias toward low complexity; that stretch reads ATSPPATTAT. The 21-residue stretch at 188 to 208 folds into the ELK domain; that stretch reads ELKEMLLKKYSGCLSRLRSEF. A DNA-binding region (homeobox; TALE-type) is located at residues 209–272; it reads LKKRKKGKLP…NQRKRHWKPS (64 aa).

This sequence belongs to the TALE/KNOX homeobox family.

It is found in the nucleus. Its function is as follows. Probable transcription factor that may be involved in shoot formation during early embryogenesis. The polypeptide is Homeobox protein knotted-1-like 1 (OSH6) (Oryza sativa subsp. japonica (Rice)).